The chain runs to 1196 residues: uncharacterized protein (1196 aa).

The helical transmembrane segment at 27–47 (ILLLLGSFILLNVWINVVTLL) threads the bilayer. Disordered stretches follow at residues 150-345 (GGGE…PQAH), 367-402 (SSVPVPTSAPAPPGTLAPATTPVLAPTPAPVPASAP), 669-762 (TQDS…QKNT), 775-806 (CLTQSPGLHKKTPFTQTSDLQRSSGFTQDSGI), 826-877 (QATD…QDSE), 960-1009 (YRSS…GPYK), and 1168-1196 (KCEALSPRRLHQEAPSNSGKPSRSGDIRM). Residues 157 to 177 (VTASKAQASLLSRPETSSQFP) show a composition bias toward polar residues. Low complexity-rich tracts occupy residues 212–227 (HSPTHTPVCTPTHPWT) and 253–279 (THSQAQDTSAQAQAHTSAPTPAQTPAH). The span at 299-321 (HTSAQAQTHSPPHTPEYTHSQAH) shows a compositional bias: polar residues. Residues 391–402 (APTPAPVPASAP) are compositionally biased toward pro residues. Polar residues-rich tracts occupy residues 733–742 (YLCQNPSPSQ), 750–762 (SGITQDSHPQKNT), 787–804 (PFTQTSDLQRSSGFTQDS), and 826–849 (QATDHQKNLGSSKDSGGHKNTGNV). Residues 962 to 971 (SSEHSQDSNL) show a composition bias toward basic and acidic residues.

Its subcellular location is the membrane. This is an uncharacterized protein from Homo sapiens (Human).